Here is a 131-residue protein sequence, read N- to C-terminus: Phosphoribosyl-AMP cyclohydrolase (131 aa).

D76 serves as a coordination point for Mg(2+). Zn(2+) is bound at residue C77. D78 and D80 together coordinate Mg(2+). C94 and C101 together coordinate Zn(2+).

It belongs to the PRA-CH family. As to quaternary structure, homodimer. Requires Mg(2+) as cofactor. It depends on Zn(2+) as a cofactor.

The protein resides in the cytoplasm. The enzyme catalyses 1-(5-phospho-beta-D-ribosyl)-5'-AMP + H2O = 1-(5-phospho-beta-D-ribosyl)-5-[(5-phospho-beta-D-ribosylamino)methylideneamino]imidazole-4-carboxamide. It participates in amino-acid biosynthesis; L-histidine biosynthesis; L-histidine from 5-phospho-alpha-D-ribose 1-diphosphate: step 3/9. Functionally, catalyzes the hydrolysis of the adenine ring of phosphoribosyl-AMP. The sequence is that of Phosphoribosyl-AMP cyclohydrolase from Stutzerimonas stutzeri (strain A1501) (Pseudomonas stutzeri).